A 385-amino-acid polypeptide reads, in one-letter code: cAMP-dependent protein kinase, catalytic subunit-like (385 aa).

In terms of domain architecture, Protein kinase spans 63–317 (LERIVTIGKG…TQDVKDHKWF (255 aa)). ATP is bound by residues 69 to 77 (IGKGTFGRV) and Lys92. The Proton acceptor role is filled by Asp186. The AGC-kinase C-terminal domain occupies 318–385 (EKVNWDDTLH…QRERDLFAEW (68 aa)).

It belongs to the protein kinase superfamily. Ser/Thr protein kinase family. cAMP subfamily.

It carries out the reaction L-seryl-[protein] + ATP = O-phospho-L-seryl-[protein] + ADP + H(+). It catalyses the reaction L-threonyl-[protein] + ATP = O-phospho-L-threonyl-[protein] + ADP + H(+). The sequence is that of cAMP-dependent protein kinase, catalytic subunit-like from Caenorhabditis briggsae.